The sequence spans 271 residues: Fork head domain-containing protein FD5 (271 aa).

The fork-head DNA-binding region spans 12–103 (QKPPYSYISL…FDMFENGSLL (92 aa)).

Expressed in early embryogenesis in 14 symmetrical pairs of segmentally arranged neuroblasts and in developing peripheral nervous system. Also, later in embryogenesis, in a cluster of cells in head region.

Its subcellular location is the nucleus. In terms of biological role, involved in development during embryogenesis. This chain is Fork head domain-containing protein FD5 (fd96Cb), found in Drosophila melanogaster (Fruit fly).